Reading from the N-terminus, the 690-residue chain is Glutamate--cysteine ligase (690 aa).

2 stretches are compositionally biased toward low complexity: residues 574-585 (QQQNGHVNNNNN) and 598-619 (NGST…TNGT). The interval 574 to 620 (QQQNGHVNNNNNNDKKTKNDPIIVNGSTTTTNGTNSGSGITETNGTM) is disordered.

Belongs to the glutamate--cysteine ligase type 3 family.

It catalyses the reaction L-cysteine + L-glutamate + ATP = gamma-L-glutamyl-L-cysteine + ADP + phosphate + H(+). It participates in sulfur metabolism; glutathione biosynthesis; glutathione from L-cysteine and L-glutamate: step 1/2. The protein is Glutamate--cysteine ligase (GCS1) of Candida albicans (Yeast).